The chain runs to 325 residues: Collagen alpha-1(IX) chain (325 aa).

Low complexity predominate over residues 1–54 (PGQLGNSGKPGQQGPPGEVGPRGPRGLPGSRGPVGPEGSPGIPGKLGPLGSPGL). 2 disordered regions span residues 1-163 (PGQL…APTD) and 187-325 (RPDT…GPDK). Over residues 198–208 (RPGPPGPPGPP) the composition is skewed to pro residues. Over residues 237 to 249 (PKGDLGEKGERGP) the composition is skewed to basic and acidic residues. Residues 292-304 (VPGPPGPPGPPGF) are compositionally biased toward pro residues.

The protein belongs to the fibril-associated collagens with interrupted helices (FACIT) family. Heterotrimer of an alpha 1(IX), an alpha 2(IX) and an alpha 3(IX) chain. Post-translationally, covalently linked to the telopeptides of type II collagen by lysine-derived cross-links. Prolines at the third position of the tripeptide repeating unit (G-X-Y) are hydroxylated in some or all of the chains.

The protein resides in the secreted. It localises to the extracellular space. It is found in the extracellular matrix. Its function is as follows. Structural component of hyaline cartilage and vitreous of the eye. The protein is Collagen alpha-1(IX) chain (Col9a1) of Rattus norvegicus (Rat).